A 267-amino-acid chain; its full sequence is Thiamine pyrophosphokinase 2 (267 aa).

Belongs to the thiamine pyrophosphokinase family. As to expression, expressed in leaves and at lower levels in flowers.

It localises to the cytoplasm. The protein localises to the cytosol. It carries out the reaction thiamine + ATP = thiamine diphosphate + AMP + H(+). The protein operates within cofactor biosynthesis; thiamine diphosphate biosynthesis; thiamine diphosphate from thiamine: step 1/1. Functionally, catalyzes the phosphorylation of thiamine to thiamine pyrophosphate (TPP). TPP is an active cofactor for enzymes involved in glycolysis and energy production. Plant leaves require high levels of TPP for photosynthesis and carbohydrate metabolism. This is Thiamine pyrophosphokinase 2 from Arabidopsis thaliana (Mouse-ear cress).